A 110-amino-acid chain; its full sequence is Cell cycle protein GpsB (110 aa).

A coiled-coil region spans residues Lys-37–Ala-63. Residues Lys-59–His-79 form a disordered region. Positions Ala-60–Ser-75 are enriched in low complexity.

The protein belongs to the GpsB family. In terms of assembly, forms polymers through the coiled coil domains. Interacts with PBP1, MreC and EzrA.

The protein resides in the cytoplasm. Divisome component that associates with the complex late in its assembly, after the Z-ring is formed, and is dependent on DivIC and PBP2B for its recruitment to the divisome. Together with EzrA, is a key component of the system that regulates PBP1 localization during cell cycle progression. Its main role could be the removal of PBP1 from the cell pole after pole maturation is completed. Also contributes to the recruitment of PBP1 to the division complex. Not essential for septum formation. This Streptococcus thermophilus (strain CNRZ 1066) protein is Cell cycle protein GpsB.